Reading from the N-terminus, the 163-residue chain is MKTKLITREGYNKLKQEHDYLWNEKRPEITKIVTWAASLGDRSENADYTFNKRLLRQIDRRVRFLRKFLPEVTIVDYSPQQEGKVFFGAWVEIENEAGDVKKFRIVGPEEIYGDAKDYISIDSPMARAMLKKQVDEEFTVRTPEGDKEWFINSIEYNKQSAES.

Belongs to the GreA/GreB family. GreB subfamily.

Its function is as follows. Necessary for efficient RNA polymerase transcription elongation past template-encoded arresting sites. The arresting sites in DNA have the property of trapping a certain fraction of elongating RNA polymerases that pass through, resulting in locked ternary complexes. Cleavage of the nascent transcript by cleavage factors such as GreA or GreB allows the resumption of elongation from the new 3'terminus. GreB releases sequences of up to 9 nucleotides in length. The polypeptide is Transcription elongation factor GreB (Vibrio parahaemolyticus serotype O3:K6 (strain RIMD 2210633)).